Here is a 647-residue protein sequence, read N- to C-terminus: Knirps-related protein (647 aa).

The segment at residues 11-87 (NQTCKVCGEP…VGMSKSGSRY (77 aa)) is a DNA-binding region (nuclear receptor). 2 NR C4-type zinc fingers span residues 14–34 (CKVC…CEGC) and 51–75 (CKNN…LKKC). 4 disordered regions span residues 111–142 (MAAH…KGMS), 196–274 (HKHP…LSPF), 340–383 (GAGQ…LLTN), and 402–600 (SQQQ…NSIL). A compositionally biased stretch (gly residues) spans 120-134 (AGGGSSGGSGGGQGM). Low complexity-rich tracts occupy residues 200–223 (VVAS…VSSV) and 232–247 (GGKS…ADGS). Gly residues predominate over residues 248-260 (HSGGGGGGGGGVT). Polar residues-rich tracts occupy residues 370 to 381 (SPSTHANNNHLL) and 420 to 432 (DYSI…PNSE). 2 stretches are compositionally biased toward basic and acidic residues: residues 433 to 443 (SGRERVKSRQN) and 480 to 491 (QEERTPAGEDPR). Residues 502–519 (LSMKTTGSSLSSKSSSPE) are compositionally biased toward low complexity. A compositionally biased stretch (acidic residues) spans 520-541 (IEPETEISSDVEKNDTDDDDED). The segment covering 542 to 556 (LKVTPEEEISVRETA) has biased composition (basic and acidic residues). Positions 567–579 (TTETAKTSIENTH) are enriched in polar residues. Residues 580–599 (NNNNSISNNNNNNNNNNNSI) are compositionally biased toward low complexity.

Belongs to the nuclear hormone receptor family. NR0 subfamily.

It is found in the nucleus. This chain is Knirps-related protein (knrl), found in Drosophila melanogaster (Fruit fly).